A 141-amino-acid chain; its full sequence is LOB domain-containing protein 34 (141 aa).

In terms of domain architecture, LOB spans 16–119; sequence NQCAACRHQR…SPLNYVAPVI (104 aa).

Belongs to the LOB domain-containing protein family.

The polypeptide is LOB domain-containing protein 34 (LBD34) (Arabidopsis thaliana (Mouse-ear cress)).